Consider the following 410-residue polypeptide: Transcription termination factor, mitochondrial (410 aa).

Residues 1-44 (MIRSLLRSFETALKLHAGLNMHPMHCSRRLLFSQYENRASPSRL) constitute a mitochondrion transit peptide.

Belongs to the mTERF family.

Its subcellular location is the mitochondrion. In terms of biological role, transcription termination factor. Binds promoter DNA and regulates mitochondrial replication and transcription. Transcription termination activity may be polarized with highest termination activity occurring when its DNA-binding site is positioned in the reverse orientation with respect to the incoming RNA polymerase. Required for normal topology and maintenance of mitochondrial DNA (mtDNA) levels. Regulates mtDNA replication by promoting replication pausing, possibly by acting as a natural barrier to replication fork progression. Its function in replication pausing prevents unregulated replication that may occur for example by collisions between the machineries of DNA replication and transcription during mtDNA synthesis. This ensures the incorporation of RNA transcripts into replication intermediates at the replication fork and allow for proper fork progression. Shares mtDNA binding sites with the mitochondrial termination factor mTerf5 and thereby may antagonize mTerf5 function during replication to regulate pausing. Likely to function downstream of Dref which activates genes involved in mtDNA replication and maintenance. The chain is Transcription termination factor, mitochondrial from Drosophila melanogaster (Fruit fly).